Reading from the N-terminus, the 54-residue chain is Conotoxin vc5a (54 aa).

The N-terminal stretch at 1-14 (VILLLITSTPSVDA) is a signal peptide. Positions 15–42 (RLKAKDNMPLASFHDNAKRTLQTRLINT) are excised as a propeptide. P49 is modified (4-hydroxyproline). An Isoleucine amide modification is found at I53.

The protein belongs to the conotoxin T superfamily. Contains 2 disulfide bonds that can be either 'C1-C3, C2-C4' or 'C1-C4, C2-C3', since these disulfide connectivities have been observed for conotoxins with cysteine framework V (for examples, see AC P0DQQ7 and AC P81755). In terms of tissue distribution, expressed by the venom duct.

Its subcellular location is the secreted. The chain is Conotoxin vc5a from Conus victoriae (Queen Victoria cone).